A 346-amino-acid chain; its full sequence is Hydroxycarboxylic acid receptor 1 (346 aa).

Residues 1 to 21 (MYNGSCCRIEGDTISQVMPPL) lie on the Extracellular side of the membrane. Asn-3 carries an N-linked (GlcNAc...) asparagine glycan. The chain crosses the membrane as a helical span at residues 22–42 (LIVAFVLGALGNGVALCGFCF). Over 43–49 (HMKTWKP) the chain is Cytoplasmic. Residues 50–70 (STVYLFNLAVADFLLMICLPF) form a helical membrane-spanning segment. Topologically, residues 71-89 (RTDYYLRRRHWAFGDIPCR) are extracellular. Residues Cys-88 and Cys-165 are joined by a disulfide bond. The helical transmembrane segment at 90–110 (VGLFTLAMNRAGSIVFLTVVA) threads the bilayer. Over 111 to 130 (ADRYFKVVHPHHAVNTISTR) the chain is Cytoplasmic. Residues 131-151 (VAAGIVCTLWALVILGTVYLL) form a helical membrane-spanning segment. At 152–182 (LENHLCVQETAVSCESFIMESANGWHDIMFQ) the chain is on the extracellular side. A helical transmembrane segment spans residues 183 to 203 (LEFFMPLGIILFCSFKIVWSL). Topologically, residues 204–220 (RRRQQLARQARMKKATR) are cytoplasmic. Residues 221-241 (FIMVVAIVFITCYLPSVSARL) form a helical membrane-spanning segment. Topologically, residues 242–261 (YFLWTVPSSACDPSVHGALH) are extracellular. The helical transmembrane segment at 262-281 (ITLSFTYMNSMLDPLVYYFS) threads the bilayer. The Cytoplasmic segment spans residues 282-346 (SPSFPKFYNK…QWDPHIVEWH (65 aa)).

It belongs to the G-protein coupled receptor 1 family. Expressed abundantly in brown and white fat. It also detectable at lower levels in liver, kidney, skeletal muscle, brain and pituitary. Not detected in frontal, temporal and occipital lobes of the cortex, basal forebrain, caudate nucleus, nucleus accumbens and hippocampus.

The protein resides in the cell membrane. Functionally, acts as a receptor for L-lactate and mediates its anti-lipolytic effect through a G(i)-protein-mediated pathway. This chain is Hydroxycarboxylic acid receptor 1 (HCAR1), found in Homo sapiens (Human).